The chain runs to 733 residues: Alpha,alpha-trehalose-phosphate synthase [UDP-forming] A (733 aa).

The protein in the N-terminal section; belongs to the glycosyltransferase 20 family. This sequence in the C-terminal section; belongs to the trehalose phosphatase family.

The enzyme catalyses D-glucose 6-phosphate + UDP-alpha-D-glucose = alpha,alpha-trehalose 6-phosphate + UDP + H(+). Its function is as follows. Synthesizes trehalose 6-phosphate, the precursor for the production of trehalose, the main carbohydrate storage reserve of the dormant spore. Trehalose accumulates in both prestalk and prespore cells and then is rapidly metabolized during terminal differentiation of stalk cells, while being stored in spores, where it serves as the principal energy and carbon source for germination. This Dictyostelium discoideum (Social amoeba) protein is Alpha,alpha-trehalose-phosphate synthase [UDP-forming] A (tpsA).